The sequence spans 32 residues: Yop proteins translocation protein A (32 aa).

In Yersinia pestis, this protein is Yop proteins translocation protein A (yscA).